The chain runs to 194 residues: Crossover junction endodeoxyribonuclease RuvC (194 aa).

Active-site residues include Asp7, Glu68, and Asp141. Mg(2+) is bound by residues Asp7, Glu68, and Asp141.

This sequence belongs to the RuvC family. In terms of assembly, homodimer which binds Holliday junction (HJ) DNA. The HJ becomes 2-fold symmetrical on binding to RuvC with unstacked arms; it has a different conformation from HJ DNA in complex with RuvA. In the full resolvosome a probable DNA-RuvA(4)-RuvB(12)-RuvC(2) complex forms which resolves the HJ. Requires Mg(2+) as cofactor.

Its subcellular location is the cytoplasm. The enzyme catalyses Endonucleolytic cleavage at a junction such as a reciprocal single-stranded crossover between two homologous DNA duplexes (Holliday junction).. Functionally, the RuvA-RuvB-RuvC complex processes Holliday junction (HJ) DNA during genetic recombination and DNA repair. Endonuclease that resolves HJ intermediates. Cleaves cruciform DNA by making single-stranded nicks across the HJ at symmetrical positions within the homologous arms, yielding a 5'-phosphate and a 3'-hydroxyl group; requires a central core of homology in the junction. The consensus cleavage sequence is 5'-(A/T)TT(C/G)-3'. Cleavage occurs on the 3'-side of the TT dinucleotide at the point of strand exchange. HJ branch migration catalyzed by RuvA-RuvB allows RuvC to scan DNA until it finds its consensus sequence, where it cleaves and resolves the cruciform DNA. This chain is Crossover junction endodeoxyribonuclease RuvC, found in Bifidobacterium longum (strain DJO10A).